The primary structure comprises 422 residues: F-box/FBD/LRR-repeat protein At5g56420 (422 aa).

Residues 5-54 enclose the F-box domain; sequence RDRLSQLPDDFLLQILSWLPTKDVLVTSLLSKRWRFLWTLVPRLNYDLRL. LRR repeat units follow at residues 59 to 85, 136 to 163, 164 to 189, 193 to 212, 214 to 238, 279 to 304, and 305 to 330; these read CPRF…NIKI, VLKL…HLLD, VKYL…VVQR, DNVK…SLHK, SQAF…DIED, LCLI…ELCT, and CAPR…KLRQ. Residues 342–391 enclose the FBD domain; sequence SWKQPALPKCLLFHLETFKWELYEGSQKQKEVATFILKHAIRLKTAIISP.

The chain is F-box/FBD/LRR-repeat protein At5g56420 from Arabidopsis thaliana (Mouse-ear cress).